The following is a 219-amino-acid chain: 2-hydroxy-3-keto-5-methylthiopentenyl-1-phosphate phosphatase (219 aa).

Belongs to the HAD-like hydrolase superfamily. MtnX family.

It catalyses the reaction 2-hydroxy-5-methylsulfanyl-3-oxopent-1-enyl phosphate + H2O = 1,2-dihydroxy-5-(methylsulfanyl)pent-1-en-3-one + phosphate. It participates in amino-acid biosynthesis; L-methionine biosynthesis via salvage pathway; L-methionine from S-methyl-5-thio-alpha-D-ribose 1-phosphate: step 4/6. Its function is as follows. Dephosphorylates 2-hydroxy-3-keto-5-methylthiopentenyl-1-phosphate (HK-MTPenyl-1-P) yielding 1,2-dihydroxy-3-keto-5-methylthiopentene (DHK-MTPene). This is 2-hydroxy-3-keto-5-methylthiopentenyl-1-phosphate phosphatase from Bacillus cereus (strain ATCC 14579 / DSM 31 / CCUG 7414 / JCM 2152 / NBRC 15305 / NCIMB 9373 / NCTC 2599 / NRRL B-3711).